The sequence spans 467 residues: Argininosuccinate lyase (467 aa).

Residues Ser27, Asn114, and Thr159 each coordinate 2-(N(omega)-L-arginino)succinate. His160 (proton acceptor) is an active-site residue. The Proton donor role is filled by Ser281. Residues Asn289, Tyr321, Gln326, and Lys329 each coordinate 2-(N(omega)-L-arginino)succinate.

This sequence belongs to the lyase 1 family. Argininosuccinate lyase subfamily. In terms of assembly, homotetramer.

The enzyme catalyses 2-(N(omega)-L-arginino)succinate = fumarate + L-arginine. It functions in the pathway amino-acid biosynthesis; L-arginine biosynthesis; L-arginine from L-ornithine and carbamoyl phosphate: step 3/3. The protein operates within nitrogen metabolism; urea cycle; L-arginine and fumarate from (N(omega)-L-arginino)succinate: step 1/1. The sequence is that of Argininosuccinate lyase (ASL) from Aquarana catesbeiana (American bullfrog).